Consider the following 282-residue polypeptide: Phosphatidylserine decarboxylase proenzyme (282 aa).

Active-site charge relay system; for autoendoproteolytic cleavage activity residues include aspartate 85, histidine 142, and serine 244. The active-site Schiff-base intermediate with substrate; via pyruvic acid; for decarboxylase activity is serine 244. Serine 244 carries the pyruvic acid (Ser); by autocatalysis modification.

It belongs to the phosphatidylserine decarboxylase family. PSD-B subfamily. Prokaryotic type I sub-subfamily. As to quaternary structure, heterodimer of a large membrane-associated beta subunit and a small pyruvoyl-containing alpha subunit. Requires pyruvate as cofactor. Post-translationally, is synthesized initially as an inactive proenzyme. Formation of the active enzyme involves a self-maturation process in which the active site pyruvoyl group is generated from an internal serine residue via an autocatalytic post-translational modification. Two non-identical subunits are generated from the proenzyme in this reaction, and the pyruvate is formed at the N-terminus of the alpha chain, which is derived from the carboxyl end of the proenzyme. The autoendoproteolytic cleavage occurs by a canonical serine protease mechanism, in which the side chain hydroxyl group of the serine supplies its oxygen atom to form the C-terminus of the beta chain, while the remainder of the serine residue undergoes an oxidative deamination to produce ammonia and the pyruvoyl prosthetic group on the alpha chain. During this reaction, the Ser that is part of the protease active site of the proenzyme becomes the pyruvoyl prosthetic group, which constitutes an essential element of the active site of the mature decarboxylase.

Its subcellular location is the cell membrane. The catalysed reaction is a 1,2-diacyl-sn-glycero-3-phospho-L-serine + H(+) = a 1,2-diacyl-sn-glycero-3-phosphoethanolamine + CO2. The protein operates within phospholipid metabolism; phosphatidylethanolamine biosynthesis; phosphatidylethanolamine from CDP-diacylglycerol: step 2/2. Catalyzes the formation of phosphatidylethanolamine (PtdEtn) from phosphatidylserine (PtdSer). This Coxiella burnetii (strain CbuG_Q212) (Coxiella burnetii (strain Q212)) protein is Phosphatidylserine decarboxylase proenzyme.